A 239-amino-acid chain; its full sequence is Phosphoribosylaminoimidazole-succinocarboxamide synthase (239 aa).

The protein belongs to the SAICAR synthetase family.

The enzyme catalyses 5-amino-1-(5-phospho-D-ribosyl)imidazole-4-carboxylate + L-aspartate + ATP = (2S)-2-[5-amino-1-(5-phospho-beta-D-ribosyl)imidazole-4-carboxamido]succinate + ADP + phosphate + 2 H(+). Its pathway is purine metabolism; IMP biosynthesis via de novo pathway; 5-amino-1-(5-phospho-D-ribosyl)imidazole-4-carboxamide from 5-amino-1-(5-phospho-D-ribosyl)imidazole-4-carboxylate: step 1/2. In Bacillus thuringiensis subsp. konkukian (strain 97-27), this protein is Phosphoribosylaminoimidazole-succinocarboxamide synthase.